The primary structure comprises 136 residues: Small ribosomal subunit protein bS6 (136 aa).

A compositionally biased stretch (basic and acidic residues) spans 117 to 130 (EERSRSSRRQREDV). Residues 117 to 136 (EERSRSSRRQREDVIEGVEL) form a disordered region.

The protein belongs to the bacterial ribosomal protein bS6 family.

Binds together with bS18 to 16S ribosomal RNA. This is Small ribosomal subunit protein bS6 from Bartonella quintana (strain Toulouse) (Rochalimaea quintana).